Here is a 424-residue protein sequence, read N- to C-terminus: UDP-N-acetylglucosamine 1-carboxyvinyltransferase (424 aa).

22–23 (KN) provides a ligand contact to phosphoenolpyruvate. Arginine 96 contributes to the UDP-N-acetyl-alpha-D-glucosamine binding site. The Proton donor role is filled by cysteine 120. At cysteine 120 the chain carries 2-(S-cysteinyl)pyruvic acid O-phosphothioketal. UDP-N-acetyl-alpha-D-glucosamine-binding positions include 125 to 129 (RPVDQ), aspartate 312, and isoleucine 334.

The protein belongs to the EPSP synthase family. MurA subfamily.

The protein resides in the cytoplasm. It catalyses the reaction phosphoenolpyruvate + UDP-N-acetyl-alpha-D-glucosamine = UDP-N-acetyl-3-O-(1-carboxyvinyl)-alpha-D-glucosamine + phosphate. The protein operates within cell wall biogenesis; peptidoglycan biosynthesis. Cell wall formation. Adds enolpyruvyl to UDP-N-acetylglucosamine. The chain is UDP-N-acetylglucosamine 1-carboxyvinyltransferase from Polynucleobacter necessarius subsp. necessarius (strain STIR1).